A 341-amino-acid polypeptide reads, in one-letter code: Glyceraldehyde-3-phosphate dehydrogenase 1 (341 aa).

NAD(+)-binding positions include 13–14, D35, and K85; that span reads RI. D-glyceraldehyde 3-phosphate-binding positions include 157 to 159, T188, 217 to 218, and R240; these read SCT and TG. Catalysis depends on C158, which acts as the Nucleophile. Position 322 (N322) interacts with NAD(+).

This sequence belongs to the glyceraldehyde-3-phosphate dehydrogenase family. As to quaternary structure, homotetramer.

It localises to the cytoplasm. The catalysed reaction is D-glyceraldehyde 3-phosphate + phosphate + NAD(+) = (2R)-3-phospho-glyceroyl phosphate + NADH + H(+). Its pathway is carbohydrate degradation; glycolysis; pyruvate from D-glyceraldehyde 3-phosphate: step 1/5. The sequence is that of Glyceraldehyde-3-phosphate dehydrogenase 1 (gpd-1) from Caenorhabditis elegans.